Here is a 416-residue protein sequence, read N- to C-terminus: WD repeat-containing protein JIP5 (416 aa).

WD repeat units lie at residues 9-48 (PLSS…ENGK), 62-101 (RHKG…VEWK), and 112-151 (GFQV…TEVS). Residues 149-183 (EVSARPQQTHHPHDDYVSSLTPLPPSETSTSGYSK) are disordered. Low complexity predominate over residues 166 to 179 (SSLTPLPPSETSTS). 3 WD repeats span residues 214–255 (ISSS…DQDE), 264–308 (DGGE…ISEL), and 309–348 (SHDD…EEGN). 2 stretches are compositionally biased toward acidic residues: residues 343 to 359 (SDEE…DIEN) and 374 to 383 (SDEEEDSDDD). The segment at 343 to 416 (SDEEGNDDES…VHVMAFKGLD (74 aa)) is disordered. Residues 389–400 (KGKRKKRKRGKG) are compositionally biased toward basic residues.

Belongs to the WD repeat WDR55 family.

The protein resides in the nucleus. It is found in the nucleolus. This is WD repeat-containing protein JIP5 (JIP5) from Coccidioides immitis (strain RS) (Valley fever fungus).